Reading from the N-terminus, the 121-residue chain is Small ribosomal subunit protein uS13 (121 aa).

Positions 92-121 (RRGLPVRGQNSKNNARTRKGPKRTVANKKK) are disordered. Over residues 106–121 (ARTRKGPKRTVANKKK) the composition is skewed to basic residues.

It belongs to the universal ribosomal protein uS13 family. Part of the 30S ribosomal subunit. Forms a loose heterodimer with protein S19. Forms two bridges to the 50S subunit in the 70S ribosome.

Its function is as follows. Located at the top of the head of the 30S subunit, it contacts several helices of the 16S rRNA. In the 70S ribosome it contacts the 23S rRNA (bridge B1a) and protein L5 of the 50S subunit (bridge B1b), connecting the 2 subunits; these bridges are implicated in subunit movement. Contacts the tRNAs in the A and P-sites. This Shouchella clausii (strain KSM-K16) (Alkalihalobacillus clausii) protein is Small ribosomal subunit protein uS13.